The primary structure comprises 274 residues: Large ribosomal subunit protein uL2 (274 aa).

The tract at residues 223-274 (VAMNPVDHPHGGGEGRTSGGRHPVSPWGMPTKGFKTRKNKSTDKYIVRRRNK) is disordered.

This sequence belongs to the universal ribosomal protein uL2 family. In terms of assembly, part of the 50S ribosomal subunit. Forms a bridge to the 30S subunit in the 70S ribosome.

In terms of biological role, one of the primary rRNA binding proteins. Required for association of the 30S and 50S subunits to form the 70S ribosome, for tRNA binding and peptide bond formation. It has been suggested to have peptidyltransferase activity; this is somewhat controversial. Makes several contacts with the 16S rRNA in the 70S ribosome. This chain is Large ribosomal subunit protein uL2, found in Aliivibrio salmonicida (strain LFI1238) (Vibrio salmonicida (strain LFI1238)).